Here is a 169-residue protein sequence, read N- to C-terminus: Putative phosphoesterase BLi01284/BL02661 (169 aa).

H34 acts as the Proton donor in catalysis. 2 consecutive short sequence motifs (HXTX) follow at residues 34–37 (HLTL) and 115–118 (HVTV). H115 acts as the Proton acceptor in catalysis.

The protein belongs to the 2H phosphoesterase superfamily. YjcG family.

The sequence is that of Putative phosphoesterase BLi01284/BL02661 from Bacillus licheniformis (strain ATCC 14580 / DSM 13 / JCM 2505 / CCUG 7422 / NBRC 12200 / NCIMB 9375 / NCTC 10341 / NRRL NRS-1264 / Gibson 46).